The primary structure comprises 101 residues: Enhancer of yellow 2 transcription factor (101 aa).

The protein belongs to the ENY2 family. In terms of assembly, component of the nuclear pore complex (NPC)-associated TREX-2/AMEX complex (anchoring and mRNA export complex), composed of e(y)2, xmas and PCID2. Within the TREX-2/ AMEX complex, interactions with xmas is required for localization to the nuclear periphery. Component of the SAGA transcription coactivator-HAT complexes, at least composed of Ada2b, e(y)2, Pcaf/Gcn5, Taf10 and Nipped-A/Trrap. Within the SAGA complex, e(y)2, Sgf11, and not/nonstop form an additional subcomplex of SAGA called the DUB module (deubiquitination module). Component of the THO complex, composed of at least e(y)2, HPR1, THO2, THOC5, THOC6 and THOC7. Interacts with Taf9. Interacts with su(Hw) (via zinc fingers). Interacts with the nuclear pore complex (NPC). Interaction between the TREX-2/AMEX complex and the ORC complex is required for ORC localization to mRNPs, and consequently mRNA export. Within the TREX-2/AMEX-ORC complex, interacts with Orc6 and (via N-terminus or C-terminus) with Orc3. Interacts with the zinc finger protein CG9890. In terms of tissue distribution, ubiquitous.

The protein resides in the nucleus. The protein localises to the nucleoplasm. Its subcellular location is the cytoplasm. It localises to the nucleus membrane. Involved in mRNA export coupled transcription activation by association with both the TREX-2/AMEX and the SAGA complexes. The SAGA complex is a multiprotein complex that activates transcription by remodeling chromatin and mediating histone acetylation and deubiquitination. Within the SAGA complex, participates in a subcomplex that specifically deubiquitinates histone H2B. The SAGA complex is recruited to specific gene promoters by activators, where it is required for transcription. Required for nuclear receptor-mediated transactivation. Involved in transcription elongation by recruiting the THO complex onto nascent mRNA. The TREX-2/AMEX complex functions in docking export-competent ribonucleoprotein particles (mRNPs) to the nuclear entrance of the nuclear pore complex (nuclear basket). TREX-2/AMEX participates in mRNA export and accurate chromatin positioning in the nucleus by tethering genes to the nuclear periphery. Recruited to the su(Hw) insulators via its interaction with su(Hw) and participates in the barrier activity of such insulators. In contrast, it does not participate in the enhancer-blocking activity of the su(Hw) insulators. The chain is Enhancer of yellow 2 transcription factor from Drosophila melanogaster (Fruit fly).